The primary structure comprises 415 residues: uncharacterized protein (415 aa).

Residues cysteine 276 and cysteine 316 each contribute to the [4Fe-4S] cluster site.

As to quaternary structure, homodimer. It depends on [4Fe-4S] cluster as a cofactor.

This is an uncharacterized protein from Methanocaldococcus jannaschii (strain ATCC 43067 / DSM 2661 / JAL-1 / JCM 10045 / NBRC 100440) (Methanococcus jannaschii).